The primary structure comprises 142 residues: UPF0102 protein Bcep1808_0248 (142 aa).

Belongs to the UPF0102 family.

The polypeptide is UPF0102 protein Bcep1808_0248 (Burkholderia vietnamiensis (strain G4 / LMG 22486) (Burkholderia cepacia (strain R1808))).